We begin with the raw amino-acid sequence, 550 residues long: Solute carrier family 22 member 11 (550 aa).

The Cytoplasmic segment spans residues 1-10 (MAFSKLLEQA). A helical membrane pass occupies residues 11–31 (GGVGLFQTLQVLTFILPCLMI). Residues 32–142 (PSQMLLENFS…DLVCSSQGLK (111 aa)) are Extracellular-facing. Asn39, Asn56, and Asn99 each carry an N-linked (GlcNAc...) asparagine glycan. A helical transmembrane segment spans residues 143 to 163 (PLSQSIFMSGILVGSFIWGLL). The Cytoplasmic portion of the chain corresponds to 164–174 (SYRFGRKPMLS). Residues 175–195 (WCCLQLAVAGTSTIFAPTFVI) form a helical membrane-spanning segment. Over 196–200 (YCGLR) the chain is Extracellular. A helical membrane pass occupies residues 201 to 221 (FVAAFGMAGIFLSSLTLMVEW). The Cytoplasmic portion of the chain corresponds to 222 to 231 (TTTSRRAVTM). The chain crosses the membrane as a helical span at residues 232-252 (TVVGCAFSAGQAALGGLAFAL). At 253–256 (RDWR) the chain is on the extracellular side. Residues 257–277 (TLQLAASVPFFAISLISWWLP) traverse the membrane as a helical segment. Over 278 to 346 (ESARWLIIKG…FCVPVLRWRS (69 aa)) the chain is Cytoplasmic. The helical transmembrane segment at 347–367 (CAMLVVNFSLLISYYGLVFDL) threads the bilayer. The Extracellular portion of the chain corresponds to 368–378 (QSLGRDIFLLQ). The helical transmembrane segment at 379-399 (ALFGAVDFLGRATTALLLSFL) threads the bilayer. At 400-402 (GRR) the chain is on the cytoplasmic side. The helical transmembrane segment at 403–423 (TIQAGSQAMAGLAILANMLVP) threads the bilayer. Residues 424–430 (QDLQTLR) are Extracellular-facing. A helical membrane pass occupies residues 431-451 (VVFAVLGKGCFGISLTCLTIY). Topologically, residues 452–463 (KAELFPTPVRMT) are cytoplasmic. The chain crosses the membrane as a helical span at residues 464-484 (ADGILHTVGRLGAMMGPLILM). The Extracellular segment spans residues 485–490 (SRQALP). A helical membrane pass occupies residues 491 to 511 (LLPPLLYGVISIASSLVVLFF). The Cytoplasmic segment spans residues 512 to 550 (LPETQGLPLPDTIQDLESQKSTAAQGNRQEAVTVESTSL). Positions 531-550 (KSTAAQGNRQEAVTVESTSL) are disordered.

It belongs to the major facilitator (TC 2.A.1) superfamily. Organic cation transporter (TC 2.A.1.19) family. N-glycosylated. Contains several complex-type N-glycans. In terms of tissue distribution, expressed in placental trophoblasts, syncytiotrophoblast and cytotrophoblast. Also located in the proximal tubules in kidneys.

The protein resides in the cell membrane. It is found in the apical cell membrane. The protein localises to the basal cell membrane. It catalyses the reaction estrone 3-sulfate(out) + glutarate(in) = estrone 3-sulfate(in) + glutarate(out). The catalysed reaction is dehydroepiandrosterone 3-sulfate(out) = dehydroepiandrosterone 3-sulfate(in). The enzyme catalyses prostaglandin F2alpha(out) = prostaglandin F2alpha(in). It carries out the reaction prostaglandin E2(out) = prostaglandin E2(in). Functionally, antiporter that mediates the transport of conjugated steroids and other specific organic anions at the basal membrane of syncytiotrophoblast and at the apical membrane of proximal tubule epithelial cells, in exchange for anionic compounds. May be responsible for placental absorption of fetal-derived steroid sulfates such as estrone sulfate (E1S) and the steroid hormone precursor dehydroepiandrosterone sulfate (DHEA-S), as well as clearing waste products and xenobiotics from the fetus. Maybe also be involved in placental urate homeostasis. Facilitates the renal reabsorption of organic anions such as urate and derived steroid sulfates. Organic anion glutarate acts as conteranion for E1S renal uptake. Possible transport mode may also include DHEA-S/E1S exchange. Also interacts with inorganic anions such as chloride and hydroxyl ions, therefore possible transport modes may include E1S/Cl(-), E1S/OH(-), urate/Cl(-) and urate/OH(-). Also mediates the transport of prostaglandin E2 (PGE2) and prostaglandin F2-alpha (PGF2-alpha) and may be involved in their renal excretion. Also able to uptake anionic drugs, diuretics, bile salts and ochratoxin A. Mediates the unidirectional efflux of glutamate and aspartate. Glutamate efflux down its transmembrane gradient may drive SLC22A11/OAT4-mediated placental uptake of E1S. This chain is Solute carrier family 22 member 11, found in Homo sapiens (Human).